The following is a 213-amino-acid chain: Large ribosomal subunit protein uL3 (213 aa).

Q151 carries the post-translational modification N5-methylglutamine.

It belongs to the universal ribosomal protein uL3 family. Part of the 50S ribosomal subunit. Forms a cluster with proteins L14 and L19. In terms of processing, methylated by PrmB.

One of the primary rRNA binding proteins, it binds directly near the 3'-end of the 23S rRNA, where it nucleates assembly of the 50S subunit. The protein is Large ribosomal subunit protein uL3 of Rhizobium johnstonii (strain DSM 114642 / LMG 32736 / 3841) (Rhizobium leguminosarum bv. viciae).